We begin with the raw amino-acid sequence, 258 residues long: Regulatory protein RecX (258 aa).

Belongs to the RecX family.

The protein resides in the cytoplasm. Its function is as follows. Modulates RecA activity. The chain is Regulatory protein RecX from Streptococcus gordonii (strain Challis / ATCC 35105 / BCRC 15272 / CH1 / DL1 / V288).